The sequence spans 418 residues: Xanthosine permease (418 aa).

The Cytoplasmic portion of the chain corresponds to 1 to 9 (MSIAMRLKV). Residues 10 to 30 (MSFLQYFIWGSWLVTLGSYMI) traverse the membrane as a helical segment. Residues 31–41 (NTLHFTGANVG) lie on the Periplasmic side of the membrane. A helical membrane pass occupies residues 42-62 (MVYSSKGIAAIIMPGIMGIIA). The Cytoplasmic portion of the chain corresponds to 63–70 (DKWLRAER). 2 helical membrane passes run 71 to 91 (AYMLCHLVCAGVLFYAASVTD) and 92 to 112 (PDMMFWVMLVNAMAFMPTIAL). The Cytoplasmic portion of the chain corresponds to 113–136 (SNSVSYSCLAQAGLDPVTAFPPIR). The helical transmembrane segment at 137–157 (VFGTVGFIVAMWAVSLLHLEL) threads the bilayer. Over 158–159 (SS) the chain is Periplasmic. A helical transmembrane segment spans residues 160–180 (LQLYIASGASLLLSAYALTLP). The Cytoplasmic portion of the chain corresponds to 181-209 (KIPVAEKKATTSLASKLGLDAFVLFKNPR). Residues 210–230 (MAIFFLFAMMLGAVLQITNVF) form a helical membrane-spanning segment. The Periplasmic segment spans residues 231–254 (GNPFLHDFARNPEFADSFVVKYPS). Residues 255 to 275 (ILLSVSQMAEVGFILTIPFFL) traverse the membrane as a helical segment. The Cytoplasmic segment spans residues 276 to 277 (KR). A helical membrane pass occupies residues 278–298 (FGIKTVMLMSMVAWTLRFGFF). Over 299 to 306 (AYGDPSTT) the chain is Periplasmic. Residues 307-327 (GFILLLLSMIVYGCAFDFFNI) traverse the membrane as a helical segment. Residues 328-348 (SGSVFVEQEVDSSIRASAQGL) lie on the Cytoplasmic side of the membrane. The chain crosses the membrane as a helical span at residues 349–369 (FMTMVNGVGAWVGSILSGMAV). At 370 to 381 (DYFSVDGVKDWQ) the chain is on the periplasmic side. Residues 382–402 (TIWLVFAGYALFLAVIFFFGF) traverse the membrane as a helical segment. Over 403–418 (KYNHDPEKIKHRAVTH) the chain is Cytoplasmic.

This sequence belongs to the major facilitator superfamily. Nucleoside:H(+) symporter (NHS) (TC 2.A.1.10) family.

It is found in the cell inner membrane. The catalysed reaction is xanthosine(in) + H(+)(in) = xanthosine(out) + H(+)(out). Transport is abolished by the proton uncoupler 2,4-dinitrophenol. Its function is as follows. Uptake of xanthosine. Can also transport other nucleosides such as inosine, adenosine, cytidine, uridine and thymidine. Transport is driven by a proton motive force. The chain is Xanthosine permease from Escherichia coli (strain K12).